The following is a 155-amino-acid chain: Transcriptional repressor NrdR (155 aa).

A zinc finger spans residues 3 to 34 (CPYCQNADTRVVDSRLIGEGEQVRRRRQCPSC). The region spanning 49–139 (PRVVKSDGRR…VYRRFEDVGA (91 aa)) is the ATP-cone domain.

Belongs to the NrdR family. It depends on Zn(2+) as a cofactor.

Functionally, negatively regulates transcription of bacterial ribonucleotide reductase nrd genes and operons by binding to NrdR-boxes. The protein is Transcriptional repressor NrdR of Halorhodospira halophila (strain DSM 244 / SL1) (Ectothiorhodospira halophila (strain DSM 244 / SL1)).